The chain runs to 530 residues: Chaperone Ric-8A (530 aa).

S435 is modified (phosphoserine). Residues T440 and T442 each carry the phosphothreonine modification. Phosphoserine is present on residues S501, S522, S523, and S527.

The protein belongs to the synembryn family. As to quaternary structure, interacts with GDP-bound G alpha proteins GNAI1, GNAO1 and GNAQ, and with GNA13 with lower affinity. Does not interact with G-alpha proteins when they are in complex with subunits beta and gamma. Interacts (via C-terminus) with RGS14; the interaction stimulates the dissociation of the complex between RGS14 and the active GTP-bound form of GNAI1. Interacts with NCS1; interaction is favored in the absence of Ca(2+) and myristoylation of NCS1 is not required. As to expression, expressed in neurons and neurites of the CA1 and CA2 subregions of the hippocampus (at protein level). In adult brain, it is expressed in the neocortex, hippocampus and cerebellum as well as in the pineal gland and ependymal layer.

The protein resides in the cytoplasm. It is found in the cell cortex. Functionally, chaperone that specifically binds and folds nascent G alpha proteins prior to G protein heterotrimer formation, promoting their stability and activity: folds GNAI1, GNAO1, GNA13 and GNAQ. Does not fold G(s) G-alpha proteins GNAS nor GNAL. Also acts as a guanine nucleotide exchange factor (GEF) for G alpha proteins by stimulating exchange of bound GDP for free GTP. Involved in regulation of microtubule pulling forces during mitotic movement of chromosomes by stimulating G(i)-alpha protein (GNAI1), possibly leading to release G(i)-alpha-GTP and NuMA proteins from the NuMA-GPSM2-G(i)-alpha-GDP complex. Also acts as an activator for G(q)-alpha (GNAQ) protein by enhancing the G(q)-coupled receptor-mediated ERK activation. The sequence is that of Chaperone Ric-8A from Mus musculus (Mouse).